A 397-amino-acid polypeptide reads, in one-letter code: ATP-dependent RNA helicase eIF4A (397 aa).

The short motif at 24-52 (DSFDDMNLKSELLRGIYAYGFERPSAIQQ) is the Q motif element. One can recognise a Helicase ATP-binding domain in the interval 55 to 225 (IMPVIKGHDV…TKFMRDPVRI (171 aa)). Residue 68–75 (AQSGTGKT) participates in ATP binding. The short motif at 173–176 (DEAD) is the DEAD box element. Residues 236 to 397 (GIKQFYIAVE…EMPMNVADLI (162 aa)) form the Helicase C-terminal domain.

Belongs to the DEAD box helicase family. eIF4A subfamily. As to quaternary structure, component of the eIF4F complex, which composition varies with external and internal environmental conditions. It is composed of at least eIF4A, eIF4E and eIF4G.

It localises to the cytoplasm. The enzyme catalyses ATP + H2O = ADP + phosphate + H(+). Its function is as follows. ATP-dependent RNA helicase which is a subunit of the eIF4F complex involved in cap recognition and is required for mRNA binding to ribosome. In the current model of translation initiation, eIF4A unwinds RNA secondary structures in the 5'-UTR of mRNAs which is necessary to allow efficient binding of the small ribosomal subunit, and subsequent scanning for the initiator codon. The sequence is that of ATP-dependent RNA helicase eIF4A (TIF1) from Chaetomium globosum (strain ATCC 6205 / CBS 148.51 / DSM 1962 / NBRC 6347 / NRRL 1970) (Soil fungus).